Consider the following 367-residue polypeptide: Mitogen-activated protein kinase 12 (367 aa).

Positions 27-311 constitute a Protein kinase domain; sequence YRDLQPVGSG…AGEALAHPYF (285 aa). ATP contacts are provided by residues 33–41 and lysine 56; that span reads VGSGAYGAV. Residue aspartate 153 is the Proton acceptor of the active site. Residue threonine 183 is modified to Phosphothreonine; by MAP2K3 and MAP2K6. Residues 183–185 carry the TXY motif; that stretch reads TGY. Tyrosine 185 bears the Phosphotyrosine mark.

The protein belongs to the protein kinase superfamily. CMGC Ser/Thr protein kinase family. MAP kinase subfamily. Monomer. Interacts with the PDZ domain of the syntrophin SNTA1. Interacts with SH3BP5. Interacts with LIN7C, SCRIB and SYNJ2BP. Interacts with PTPN4; this interaction induces the activation of PTPN4 phosphatase activity. The cofactor is Mg(2+). Dually phosphorylated on Thr-183 and Tyr-185 by MAP2K3/MKK3 and MAP2K6/MKK6, which activates the enzyme. Post-translationally, ubiquitinated. Ubiquitination leads to degradation by the proteasome pathway. As to expression, highly expressed in skeletal muscle and heart.

Its subcellular location is the cytoplasm. It localises to the nucleus. The protein localises to the mitochondrion. The enzyme catalyses L-seryl-[protein] + ATP = O-phospho-L-seryl-[protein] + ADP + H(+). The catalysed reaction is L-threonyl-[protein] + ATP = O-phospho-L-threonyl-[protein] + ADP + H(+). Its activity is regulated as follows. Activated by phosphorylation on threonine and tyrosine. MAP2K3/MKK3 and MAP2K6/MKK6 are both essential for the activation of MAPK12 induced by environmental stress, whereas MAP2K6/MKK6 is the major MAPK12 activator in response to TNF-alpha. In terms of biological role, serine/threonine kinase which acts as an essential component of the MAP kinase signal transduction pathway. MAPK12 is one of the four p38 MAPKs which play an important role in the cascades of cellular responses evoked by extracellular stimuli such as pro-inflammatory cytokines or physical stress leading to direct activation of transcription factors such as ELK1 and ATF2. Accordingly, p38 MAPKs phosphorylate a broad range of proteins and it has been estimated that they may have approximately 200 to 300 substrates each. Some of the targets are downstream kinases such as MAPKAPK2, which are activated through phosphorylation and further phosphorylate additional targets. Plays a role in myoblast differentiation and also in the down-regulation of cyclin D1 in response to hypoxia in adrenal cells suggesting MAPK12 may inhibit cell proliferation while promoting differentiation. Phosphorylates DLG1. Following osmotic shock, MAPK12 in the cell nucleus increases its association with nuclear DLG1, thereby causing dissociation of DLG1-SFPQ complexes. This function is independent of its catalytic activity and could affect mRNA processing and/or gene transcription to aid cell adaptation to osmolarity changes in the environment. Regulates UV-induced checkpoint signaling and repair of UV-induced DNA damage and G2 arrest after gamma-radiation exposure. MAPK12 is involved in the regulation of SLC2A1 expression and basal glucose uptake in L6 myotubes; and negatively regulates SLC2A4 expression and contraction-mediated glucose uptake in adult skeletal muscle. C-Jun (JUN) phosphorylation is stimulated by MAPK14 and inhibited by MAPK12, leading to a distinct AP-1 regulation. MAPK12 is required for the normal kinetochore localization of PLK1, prevents chromosomal instability and supports mitotic cell viability. MAPK12-signaling is also positively regulating the expansion of transient amplifying myogenic precursor cells during muscle growth and regeneration. The chain is Mitogen-activated protein kinase 12 (MAPK12) from Homo sapiens (Human).